We begin with the raw amino-acid sequence, 913 residues long: Valine--tRNA ligase (913 aa).

A 'HIGH' region motif is present at residues Pro-48–His-58. A 'KMSKS' region motif is present at residues Lys-541–Ser-545. Lys-544 contributes to the ATP binding site. Residues Val-839–Val-907 adopt a coiled-coil conformation.

The protein belongs to the class-I aminoacyl-tRNA synthetase family. ValS type 1 subfamily. Monomer.

It is found in the cytoplasm. It carries out the reaction tRNA(Val) + L-valine + ATP = L-valyl-tRNA(Val) + AMP + diphosphate. Its function is as follows. Catalyzes the attachment of valine to tRNA(Val). As ValRS can inadvertently accommodate and process structurally similar amino acids such as threonine, to avoid such errors, it has a 'posttransfer' editing activity that hydrolyzes mischarged Thr-tRNA(Val) in a tRNA-dependent manner. This chain is Valine--tRNA ligase, found in Thermosynechococcus vestitus (strain NIES-2133 / IAM M-273 / BP-1).